Consider the following 471-residue polypeptide: MAVEISETLTFECETGNYHTFCPISCVAWLYQKIEDSFFLVVGTKTCGYFSQNSLGVMIFAEPRYAMAELEEGDIPAQLNDYGESKRLCIQIIKNRNPSVIIWIGTCTTEIIKMDLEGIAPKLEAEIGVPIVVARANGLDYAFTQGEDTVLAAVTHRCPERKSSVGGQNQPVQDEELQEFFSFLPPNDENVKKTVVGSQKNPPLVLFGSLPSAVAHQPSSELKRQSIQISGWIPTERYNNLPSLGDEVYVCGVNPFLSRTATSLMRRRKCQLIGAPFPIGPDGTRAWIEKICSVFGIEAQGLEKREKKVWDSLENYLDQVRGKSVFFMGDNPLEISLARFLIRCGMTVYEIGIPYMDKRYQAAELYFLQNTCRDMRIPMPRIVEKPDNYNQLQRMYELQPDLVFTGMAHANPLQARGINTRWSIEFTFAQIHGFTNAKEILKLIIRPLKDNNDFKNFDWTNLVRKDNNSLN.

[4Fe-4S] cluster is bound by residues Cys22, Cys47, and Cys107.

Belongs to the BchN/ChlN family. Protochlorophyllide reductase is composed of three subunits; ChlL, ChlN and ChlB. Forms a heterotetramer of two ChlB and two ChlN subunits. [4Fe-4S] cluster is required as a cofactor.

Its subcellular location is the plastid. It is found in the chloroplast. The catalysed reaction is chlorophyllide a + oxidized 2[4Fe-4S]-[ferredoxin] + 2 ADP + 2 phosphate = protochlorophyllide a + reduced 2[4Fe-4S]-[ferredoxin] + 2 ATP + 2 H2O. It participates in porphyrin-containing compound metabolism; chlorophyll biosynthesis (light-independent). Its function is as follows. Component of the dark-operative protochlorophyllide reductase (DPOR) that uses Mg-ATP and reduced ferredoxin to reduce ring D of protochlorophyllide (Pchlide) to form chlorophyllide a (Chlide). This reaction is light-independent. The NB-protein (ChlN-ChlB) is the catalytic component of the complex. The sequence is that of Light-independent protochlorophyllide reductase subunit N from Huperzia lucidula (Shining clubmoss).